Reading from the N-terminus, the 791-residue chain is Ataxin-2 homolog (791 aa).

The span at 1-22 shows a compositional bias: polar residues; that stretch reads MATRSVSMKQTSQRAASPNKTQ. Disordered regions lie at residues 1–28, 60–100, 112–134, 235–311, 326–423, 452–505, 613–634, and 707–791; these read MATRSVSMKQTSQRAASPNKTQGAKKWS, RGGV…QQRV, RTETRQRELRRWMPDPEDAGVPL, TRSN…KEGQ, SLDS…TKLG, KPAP…PVSS, NPSQHTSVAPSPNGTPTSGNSS, and PMYG…EAKP. Low complexity predominate over residues 76 to 96; the sequence is SLASSEENVSSVSGSAKSNNS. Basic and acidic residues-rich tracts occupy residues 112 to 125 and 243 to 256; these read RTETRQRELRRWMP and NNKDQKPKNHEAPH. The segment covering 326 to 337 has biased composition (polar residues); the sequence is SLDSKQPSSTKS. 2 stretches are compositionally biased toward basic and acidic residues: residues 360-371 and 395-418; these read DSKEPRKEEAEK and SKEEEKPSTEPEKPSVVTQRKETT. Positions 473-486 are enriched in low complexity; that stretch reads SIPSTTPQSPSVVS. A compositionally biased stretch (polar residues) spans 487 to 497; the sequence is NGENKPSSSPV. 2 stretches are compositionally biased toward low complexity: residues 715–725 and 734–760; these read SNSQRSFNSSN and NNNASNTFSHSNASTSSSLNAAPNTTA. Residues 774 to 791 are compositionally biased toward basic and acidic residues; the sequence is DATEKTEKDASANQEAKP.

It belongs to the ataxin-2 family. As to quaternary structure, interacts with mkt1.

The protein resides in the cytoplasm. Functionally, involved in post-transcriptional regulation of gene expression, probably by association with mkt1. This Schizosaccharomyces pombe (strain 972 / ATCC 24843) (Fission yeast) protein is Ataxin-2 homolog.